A 208-amino-acid chain; its full sequence is Small ribosomal subunit protein uS4 (208 aa).

Residues 98 to 178 (SRLDNVVYRM…RPKWLEYDAE (81 aa)) enclose the S4 RNA-binding domain.

The protein belongs to the universal ribosomal protein uS4 family. In terms of assembly, part of the 30S ribosomal subunit. Contacts protein S5. The interaction surface between S4 and S5 is involved in control of translational fidelity.

Functionally, one of the primary rRNA binding proteins, it binds directly to 16S rRNA where it nucleates assembly of the body of the 30S subunit. In terms of biological role, with S5 and S12 plays an important role in translational accuracy. The protein is Small ribosomal subunit protein uS4 of Acetivibrio thermocellus (strain ATCC 27405 / DSM 1237 / JCM 9322 / NBRC 103400 / NCIMB 10682 / NRRL B-4536 / VPI 7372) (Clostridium thermocellum).